Reading from the N-terminus, the 260-residue chain is Snake venom serine proteinase 12 (260 aa).

A signal peptide spans 1-18 (MVLIRVLANLLILQLSYA). The propeptide occupies 19–24 (QKSSEL). The region spanning 25 to 251 (VIGGDECNIN…HLDWIQSIIA (227 aa)) is the Peptidase S1 domain. Cystine bridges form between Cys31–Cys163, Cys50–Cys66, Cys98–Cys258, Cys142–Cys212, Cys174–Cys191, and Cys202–Cys227. His65 (charge relay system) is an active-site residue. Asn103 is a glycosylation site (N-linked (GlcNAc...) asparagine). Catalysis depends on Asp110, which acts as the Charge relay system. Ser206 (charge relay system) is an active-site residue.

It belongs to the peptidase S1 family. Snake venom subfamily. As to quaternary structure, monomer. Expressed by the venom gland.

The protein localises to the secreted. Snake venom serine protease that may act in the hemostasis system of the prey. The protein is Snake venom serine proteinase 12 of Crotalus adamanteus (Eastern diamondback rattlesnake).